A 475-amino-acid polypeptide reads, in one-letter code: Putative F-box protein At1g46840 (475 aa).

Positions 25-71 constitute an F-box domain; the sequence is TYVLEKLHIDLVIEILSRLSAKSIAICRCVSKQWNSLLVSQDFVESF. Residues 423–433 show a composition bias toward low complexity; that stretch reads SSYSTTRSYKS. The tract at residues 423–475 is disordered; it reads SSYSTTRSYKSSGKRCSDRSIGEDEQDDIGEKRGDQAAERRERSTKRGKHEVH. The segment covering 451-464 has biased composition (basic and acidic residues); sequence IGEKRGDQAAERRE. The span at 465-475 shows a compositional bias: basic residues; the sequence is RSTKRGKHEVH.

The sequence is that of Putative F-box protein At1g46840 from Arabidopsis thaliana (Mouse-ear cress).